We begin with the raw amino-acid sequence, 747 residues long: Myotubularin-related protein 12 (747 aa).

A compositionally biased stretch (gly residues) spans 1–14 (MLGKGVVGGGGGTK). The tract at residues 1–21 (MLGKGVVGGGGGTKGPKPSFV) is disordered. A Myotubularin phosphatase domain is found at 205–643 (FDTLKDWCWE…PEIKVWAQRY (439 aa)). An interaction with MTM1 region spans residues 449–558 (VPVFLLFLDC…KGQRKGMRFK (110 aa)). S564, S601, and S716 each carry phosphoserine.

The protein belongs to the protein-tyrosine phosphatase family. Non-receptor class myotubularin subfamily. As to quaternary structure, heterodimer with lipid phosphatase MTM1. Heterodimer with lipid phosphatase MTMR2.

Its subcellular location is the cytoplasm. It localises to the sarcoplasmic reticulum. The protein resides in the myofibril. It is found in the sarcomere. Functionally, acts as an adapter for the myotubularin-related phosphatases. Regulates phosphatase MTM1 protein stability and possibly its intracellular location. By stabilizing MTM1 protein levels, required for skeletal muscle maintenance but not for myogenesis. The polypeptide is Myotubularin-related protein 12 (MTMR12) (Pongo abelii (Sumatran orangutan)).